Consider the following 192-residue polypeptide: Type 1 phosphatases regulator YPI2 (192 aa).

Disordered regions lie at residues Met-1–Lys-53 and Glu-65–Lys-192. The segment covering Gln-8–Thr-18 has biased composition (low complexity). Basic and acidic residues predominate over residues Arg-25–Met-49. Positions Ser-69–Asp-79 are enriched in low complexity. Positions Tyr-86 to Asp-103 are enriched in basic and acidic residues. The segment covering Lys-134–Asp-148 has biased composition (polar residues). Basic residues predominate over residues Ile-157 to Arg-169.

The protein belongs to the YPI1 family.

It localises to the nucleus. Functionally, regulator of type 1 phosphatases which maintains protein phosphatase activity under strict control. In Scheffersomyces stipitis (strain ATCC 58785 / CBS 6054 / NBRC 10063 / NRRL Y-11545) (Yeast), this protein is Type 1 phosphatases regulator YPI2 (YPI2).